The following is a 119-amino-acid chain: Large ribosomal subunit protein bL20c (119 aa).

This sequence belongs to the bacterial ribosomal protein bL20 family.

The protein resides in the plastid. It localises to the chloroplast. Functionally, binds directly to 23S ribosomal RNA and is necessary for the in vitro assembly process of the 50S ribosomal subunit. It is not involved in the protein synthesizing functions of that subunit. The polypeptide is Large ribosomal subunit protein bL20c (Oedogonium cardiacum (Filamentous green alga)).